The following is a 285-amino-acid chain: Bifunctional protein FolD (285 aa).

NADP(+) is bound by residues 166–168 (GAS), serine 191, and isoleucine 232.

This sequence belongs to the tetrahydrofolate dehydrogenase/cyclohydrolase family. In terms of assembly, homodimer.

The catalysed reaction is (6R)-5,10-methylene-5,6,7,8-tetrahydrofolate + NADP(+) = (6R)-5,10-methenyltetrahydrofolate + NADPH. It carries out the reaction (6R)-5,10-methenyltetrahydrofolate + H2O = (6R)-10-formyltetrahydrofolate + H(+). The protein operates within one-carbon metabolism; tetrahydrofolate interconversion. Its function is as follows. Catalyzes the oxidation of 5,10-methylenetetrahydrofolate to 5,10-methenyltetrahydrofolate and then the hydrolysis of 5,10-methenyltetrahydrofolate to 10-formyltetrahydrofolate. The polypeptide is Bifunctional protein FolD (Actinobacillus pleuropneumoniae serotype 7 (strain AP76)).